The chain runs to 89 residues: Small ribosomal subunit protein uS15 (89 aa).

Belongs to the universal ribosomal protein uS15 family. As to quaternary structure, part of the 30S ribosomal subunit. Forms a bridge to the 50S subunit in the 70S ribosome, contacting the 23S rRNA.

One of the primary rRNA binding proteins, it binds directly to 16S rRNA where it helps nucleate assembly of the platform of the 30S subunit by binding and bridging several RNA helices of the 16S rRNA. Functionally, forms an intersubunit bridge (bridge B4) with the 23S rRNA of the 50S subunit in the ribosome. The sequence is that of Small ribosomal subunit protein uS15 from Carboxydothermus hydrogenoformans (strain ATCC BAA-161 / DSM 6008 / Z-2901).